Reading from the N-terminus, the 58-residue chain is Large ribosomal subunit protein uL30 (58 aa).

This sequence belongs to the universal ribosomal protein uL30 family. As to quaternary structure, part of the 50S ribosomal subunit.

This Pseudomonas putida (strain ATCC 700007 / DSM 6899 / JCM 31910 / BCRC 17059 / LMG 24140 / F1) protein is Large ribosomal subunit protein uL30.